An 89-amino-acid chain; its full sequence is UPF0335 protein RPE_4107 (89 aa).

Belongs to the UPF0335 family.

In Rhodopseudomonas palustris (strain BisA53), this protein is UPF0335 protein RPE_4107.